The sequence spans 878 residues: NUT family member 2A (878 aa).

4 disordered regions span residues 273-324 (WSQG…DDSC), 417-566 (QKSQ…LSYT), 627-757 (KEKQ…EEEE), and 775-878 (WLPQ…RCSQ). Pro residues-rich tracts occupy residues 278–288 (PLPPPPPPAAQ) and 427–444 (CLPPPATPRLEPRGPPAP). Positions 476-487 (TKARRPPPRPHR) are enriched in basic residues. Residues 537–551 (EPEKQREEGEVKQPQ) are compositionally biased toward basic and acidic residues.

This sequence belongs to the NUT family.

The protein is NUT family member 2A (NUTM2A) of Homo sapiens (Human).